Reading from the N-terminus, the 33-residue chain is Rhinophrynin-33 (33 aa).

Expressed by the skin glands.

It localises to the secreted. Its function is as follows. Non-cytotoxic peptide with immunosuppressive and insulinotropic effects. Induces an increased production of the anti-inflammatory cytokine IL-10 and inhibits production of the pro-inflammatory cytokines TNF-alpha and IL-1beta, when incubated with mouse peritoneal cells. Does not display growth-inhibitory activity against the Gram-positive S.epidermidis and Gram-negative E.coli bacteria and against the opportunistic yeast pathogen C.parapsilosis (MIC&gt;128 uM). In addition, it lacks cytotoxic activity against mouse erythrocytes (LC(50)&gt;500 uM) and A549 human non-small cell lung adenocarcinoma cells (LC(50)&gt;100 uM). Moderately stimulates insulin release from rat clonal beta-cells and mouse pancreatic islets. Functionally, non-cytotoxic peptide with immunosuppressive but without insulinotropic effects. Inhibits production of the pro-inflammatory cytokines TNF-alpha, but has no effect on IL-10 and IL-1beta production, when incubated with mouse peritoneal cells. Has no activity of stimulation of insulin release. This Rhinophrynus dorsalis (Mexican burrowing toad) protein is Rhinophrynin-33.